A 538-amino-acid polypeptide reads, in one-letter code: Syncytin-1 (538 aa).

An N-terminal signal peptide occupies residues 1–20; the sequence is MALPYHIFLFTVLLPSFTLT. The Extracellular portion of the chain corresponds to 21 to 443; the sequence is APPPCRCMTS…NTGPWGLLSQ (423 aa). N169 carries N-linked (GlcNAc...) asparagine glycosylation. The CXXC signature appears at 186–189; sequence CWIC. Disulfide bonds link C186–C189, C186–C405, and C397–C404. 5 N-linked (GlcNAc...) asparagine glycosylation sites follow: N208, N214, N234, N242, and N281. The fusion peptide stretch occupies residues 320–340; it reads ILPFVIGAGVLGALGTGIGGI. Positions 380 to 396 are immunosuppression; the sequence is LQNRRALDLLTAERGGT. The CX6CC signature appears at 397–405; sequence CLFLGEECC. A glycan (N-linked (GlcNAc...) asparagine) is linked at N409. A helical transmembrane segment spans residues 444–464; it reads WMPWILPFLGPLAAIILLLLF. Residues 465 to 484 form an essential for the fusiogenic function region; sequence GPCIFNLLVNFVSSRIEAVK. The Cytoplasmic segment spans residues 465 to 538; that stretch reads GPCIFNLLVN…LLRPNSAGSS (74 aa). Residues 496–538 are disordered; sequence KIYRRPLDRPASPRSDVNDIKGTPPEEILTAQPLLRPNSAGSS.

It belongs to the gamma type-C retroviral envelope protein family. HERV class-I W env subfamily. As to quaternary structure, the mature envelope protein (Env) consists of a trimer of SU-TM heterodimers attached probably by a labile interchain disulfide bond. Interacts with the C-type lectin CD209/DC-SIGN. Post-translationally, specific enzymatic cleavages in vivo yield mature proteins. Envelope glycoproteins are synthesized as an inactive precursor that is heavily N-glycosylated and processed likely by furin in the Golgi to yield the mature SU and TM proteins. The cleavage site between SU and TM requires the minimal sequence [KR]-X-[KR]-R. In terms of processing, the CXXC motif is highly conserved across a broad range of retroviral envelope proteins. It is thought to participate in the formation of a labile disulfide bond possibly with the CX6CC motif present in the transmembrane protein.

Its subcellular location is the cell membrane. The protein localises to the virion. Its function is as follows. This endogenous retroviral envelope protein has retained its original fusogenic properties and participates in trophoblast fusion and the formation of a syncytium during placenta morphogenesis. May recognize and induce fusion through binding of SLC1A4 and SLC1A5. Endogenous envelope proteins may have kept, lost or modified their original function during evolution. Retroviral envelope proteins mediate receptor recognition and membrane fusion during early infection. The surface protein (SU) mediates receptor recognition, while the transmembrane protein (TM) acts as a class I viral fusion protein. The protein may have at least 3 conformational states: pre-fusion native state, pre-hairpin intermediate state, and post-fusion hairpin state. During viral and target cell membrane fusion, the coiled coil regions (heptad repeats) assume a trimer-of-hairpins structure, positioning the fusion peptide in close proximity to the C-terminal region of the ectodomain. The formation of this structure appears to drive apposition and subsequent fusion of membranes. This chain is Syncytin-1 (ERVW-1), found in Pan troglodytes (Chimpanzee).